The primary structure comprises 203 residues: 2-phospho-L-lactate guanylyltransferase (203 aa).

This sequence belongs to the CofC family. Homodimer.

The catalysed reaction is (2S)-2-phospholactate + GTP + H(+) = (2S)-lactyl-2-diphospho-5'-guanosine + diphosphate. It functions in the pathway cofactor biosynthesis; coenzyme F420 biosynthesis. Its function is as follows. Guanylyltransferase that catalyzes the activation of (2S)-2-phospholactate (2-PL) as (2S)-lactyl-2-diphospho-5'-guanosine, via the condensation of 2-PL with GTP. It is involved in the biosynthesis of coenzyme F420, a hydride carrier cofactor. The protein is 2-phospho-L-lactate guanylyltransferase of Halomicrobium mukohataei (strain ATCC 700874 / DSM 12286 / JCM 9738 / NCIMB 13541) (Haloarcula mukohataei).